Here is a 319-residue protein sequence, read N- to C-terminus: MAALSISLAFSVDSLKPTQSTKFGFSSSSHRYPLLYSCKSHRSNLRFAFPPSSVSTATETGEENSKSTGNYAFLEESFRTGRFLSNDELEKLKTLEGFAYFQELESGSMWVRVMRHEEMDSTVHLLAESFGESMLLPSGYQSVLRFLIKQYLIERREVLPHAVTLVGFFRKKVDEFSDDGEEEAVMAGTVEVCLEKRGANASPPSPTPPKESPYICNMTVKEDLRRRGIGWHLLKASEELISQISPSKDVYLHCRMVDEAPFNMYKKAGYEVVKTDTVLVLLMLQRRKHLMRKKLLPLCTNPIVEMVGSDNELTSSANV.

The transit peptide at 1-55 directs the protein to the chloroplast; it reads MAALSISLAFSVDSLKPTQSTKFGFSSSSHRYPLLYSCKSHRSNLRFAFPPSSVS. Residues 109-297 enclose the N-acetyltransferase domain; that stretch reads MWVRVMRHEE…KHLMRKKLLP (189 aa). Residues 218-220, 226-231, 258-260, and tyrosine 265 each bind acetyl-CoA; these read MTV, RRGIGW, and DEA. Tyrosine 265 functions as the Proton donor in the catalytic mechanism.

It belongs to the acetyltransferase family. GNAT subfamily. In terms of assembly, oligomer. In terms of processing, autoacetylated. Expressed in green tissues.

Its subcellular location is the plastid. It localises to the chloroplast. The catalysed reaction is an N-terminal L-alpha-aminoacyl-[protein] + acetyl-CoA = N-terminal N(alpha)-acetyl-L-alpha-aminoacyl-[protein] + CoA + H(+). It catalyses the reaction L-lysyl-[protein] + acetyl-CoA = N(6)-acetyl-L-lysyl-[protein] + CoA + H(+). It carries out the reaction N-terminal L-alanyl-[protein] + acetyl-CoA = N-terminal N(alpha)-acetyl-L-alanyl-[protein] + CoA + H(+). The enzyme catalyses N-terminal L-seryl-[protein] + acetyl-CoA = N-terminal N(alpha)-acetyl-L-seryl-[protein] + CoA + H(+). The catalysed reaction is N-terminal L-methionyl-[protein] + acetyl-CoA = N-terminal N(alpha)-acetyl-L-methionyl-[protein] + CoA + H(+). It catalyses the reaction N-terminal L-valyl-[protein] + acetyl-CoA = N-terminal N(alpha)-acetyl-L-valyl-[protein] + CoA + H(+). It carries out the reaction N-terminal L-threonyl-[protein] + acetyl-CoA = N-terminal N(alpha)-acetyl-L-threonyl-[protein] + CoA + H(+). In terms of biological role, protein acetyltransferase with dual specificity triggering both N-alpha-acetylation (NTA), with a large spectrum of modified N-termini, including methionine, alanine, serine and to a lower extent threonine and valine as substrates, and epsilon-lysine acetylation (KA). The protein is GCN5-related N-acetyltransferase 5, chloroplastic of Arabidopsis thaliana (Mouse-ear cress).